Reading from the N-terminus, the 138-residue chain is Phosphoribosyl-AMP cyclohydrolase (138 aa).

The disordered stretch occupies residues Met1–Leu23. Asp100 provides a ligand contact to Mg(2+). Cys101 serves as a coordination point for Zn(2+). 2 residues coordinate Mg(2+): Asp102 and Asp104. Zn(2+) is bound by residues Cys117 and Cys124.

It belongs to the PRA-CH family. As to quaternary structure, homodimer. It depends on Mg(2+) as a cofactor. Zn(2+) is required as a cofactor.

It localises to the cytoplasm. The enzyme catalyses 1-(5-phospho-beta-D-ribosyl)-5'-AMP + H2O = 1-(5-phospho-beta-D-ribosyl)-5-[(5-phospho-beta-D-ribosylamino)methylideneamino]imidazole-4-carboxamide. Its pathway is amino-acid biosynthesis; L-histidine biosynthesis; L-histidine from 5-phospho-alpha-D-ribose 1-diphosphate: step 3/9. In terms of biological role, catalyzes the hydrolysis of the adenine ring of phosphoribosyl-AMP. The sequence is that of Phosphoribosyl-AMP cyclohydrolase from Paenarthrobacter aurescens (strain TC1).